A 334-amino-acid polypeptide reads, in one-letter code: Cathepsin K (334 aa).

The first 19 residues, 1-19, serve as a signal peptide directing secretion; sequence MLRLHWLALLVLLLPMAAA. The propeptide at 20 to 119 is activation peptide; it reads QLRPEPELDA…TLYVPDWSSR (100 aa). Asn-108 carries an N-linked (GlcNAc...) asparagine glycan. 3 disulfides stabilise this stretch: Cys-141–Cys-182, Cys-175–Cys-215, and Cys-274–Cys-323. The active site involves Cys-144. Catalysis depends on residues His-281 and Asn-301.

The protein belongs to the peptidase C1 family.

The enzyme catalyses Broad proteolytic activity. With small-molecule substrates and inhibitors, the major determinant of specificity is P2, which is preferably Leu, Met &gt; Phe, and not Arg.. In terms of biological role, closely involved in osteoclastic bone resorption and may participate partially in the disorder of bone remodeling. Displays potent endoprotease activity against fibrinogen at acid pH. May play an important role in extracellular matrix degradation. The sequence is that of Cathepsin K (CTSK) from Gallus gallus (Chicken).